A 507-amino-acid polypeptide reads, in one-letter code: Maturase K (507 aa).

The protein belongs to the intron maturase 2 family. MatK subfamily.

The protein localises to the plastid. Its subcellular location is the chloroplast. Functionally, usually encoded in the trnK tRNA gene intron. Probably assists in splicing its own and other chloroplast group II introns. This is Maturase K from Ranunculus macranthus (Large buttercup).